Here is a 634-residue protein sequence, read N- to C-terminus: RING finger protein 207 (634 aa).

The RING-type zinc finger occupies 25–64 (CPLCHVQYERPCLLDCFHDFCAGCLRGRATDGRLTCPLCQ). Residues 93 to 145 (VEAVRCANCDLECSEQDVETTYFCNTCGQPLCARCRDETHRARMFARHDIVAL) form a B box-type; atypical zinc finger. Zn(2+) is bound by residues Cys-98, Cys-101, Cys-127, and His-132. Coiled coils occupy residues 422-457 (EHCR…KHHS) and 494-518 (EIWE…HDLL). The disordered stretch occupies residues 552-634 (FQAPVDEQSE…DVPTWREHPT (83 aa)).

Interacts with the core-glycosylated, but not the fully glycosylated form of KCNH2/HERG. Interacts with DNAJA1 and HSPA8. Interacts (via the C-terminus) with HSPA1A; this interaction additively increases KCNH2 expression.

Its subcellular location is the cytoplasm. In terms of biological role, plays a role in cardiac repolarization possibly by stabilizing membrane expression of the potassium channel KCNH2/HERG, or by assisting its synthesis, folding or export from the endoplasmic reticulum, in a heat shock protein-dependent manner. This chain is RING finger protein 207 (RNF207), found in Homo sapiens (Human).